Consider the following 254-residue polypeptide: 4-hydroxy-tetrahydrodipicolinate reductase (254 aa).

NAD(+)-binding positions include 8–13 (GGSGRV), 87–89 (GTT), and 111–114 (ATNM). His143 serves as the catalytic Proton donor/acceptor. Position 144 (His144) interacts with (S)-2,3,4,5-tetrahydrodipicolinate. Residue Lys147 is the Proton donor of the active site. 153–154 (GT) contributes to the (S)-2,3,4,5-tetrahydrodipicolinate binding site.

The protein belongs to the DapB family.

Its subcellular location is the cytoplasm. The catalysed reaction is (S)-2,3,4,5-tetrahydrodipicolinate + NAD(+) + H2O = (2S,4S)-4-hydroxy-2,3,4,5-tetrahydrodipicolinate + NADH + H(+). It carries out the reaction (S)-2,3,4,5-tetrahydrodipicolinate + NADP(+) + H2O = (2S,4S)-4-hydroxy-2,3,4,5-tetrahydrodipicolinate + NADPH + H(+). The protein operates within amino-acid biosynthesis; L-lysine biosynthesis via DAP pathway; (S)-tetrahydrodipicolinate from L-aspartate: step 4/4. Catalyzes the conversion of 4-hydroxy-tetrahydrodipicolinate (HTPA) to tetrahydrodipicolinate. The polypeptide is 4-hydroxy-tetrahydrodipicolinate reductase (Nitratiruptor sp. (strain SB155-2)).